Here is a 196-residue protein sequence, read N- to C-terminus: Peptidyl-tRNA hydrolase (196 aa).

A tRNA-binding site is contributed by Tyr18. His23 (proton acceptor) is an active-site residue. 3 residues coordinate tRNA: Phe69, Asn71, and Asn117.

This sequence belongs to the PTH family. Monomer.

The protein localises to the cytoplasm. The enzyme catalyses an N-acyl-L-alpha-aminoacyl-tRNA + H2O = an N-acyl-L-amino acid + a tRNA + H(+). Its function is as follows. Hydrolyzes ribosome-free peptidyl-tRNAs (with 1 or more amino acids incorporated), which drop off the ribosome during protein synthesis, or as a result of ribosome stalling. Functionally, catalyzes the release of premature peptidyl moieties from peptidyl-tRNA molecules trapped in stalled 50S ribosomal subunits, and thus maintains levels of free tRNAs and 50S ribosomes. This is Peptidyl-tRNA hydrolase from Marinobacter nauticus (strain ATCC 700491 / DSM 11845 / VT8) (Marinobacter aquaeolei).